Reading from the N-terminus, the 659-residue chain is DNA ligase (659 aa).

Residues 32–36, 81–82, and Glu-110 contribute to the NAD(+) site; these read DAEYD and SL. The active-site N6-AMP-lysine intermediate is the Lys-112. Residues Arg-133, Glu-168, Lys-284, and Lys-308 each contribute to the NAD(+) site. Residues Cys-402, Cys-405, Cys-420, and Cys-425 each coordinate Zn(2+). In terms of domain architecture, BRCT spans 582–659; sequence AKPQIFAGKS…SEEEFAELLP (78 aa).

The protein belongs to the NAD-dependent DNA ligase family. LigA subfamily. The cofactor is Mg(2+). Mn(2+) serves as cofactor.

The catalysed reaction is NAD(+) + (deoxyribonucleotide)n-3'-hydroxyl + 5'-phospho-(deoxyribonucleotide)m = (deoxyribonucleotide)n+m + AMP + beta-nicotinamide D-nucleotide.. DNA ligase that catalyzes the formation of phosphodiester linkages between 5'-phosphoryl and 3'-hydroxyl groups in double-stranded DNA using NAD as a coenzyme and as the energy source for the reaction. It is essential for DNA replication and repair of damaged DNA. This is DNA ligase from Desulfitobacterium hafniense (strain Y51).